The chain runs to 377 residues: D-alanine--D-alanine ligase (377 aa).

Positions 140-349 constitute an ATP-grasp domain; sequence KELLTVNGIR…NAKLVDMLID (210 aa). An ATP-binding site is contributed by 170–225; that stretch reads VAELGNIVFVKAANQGSSVGISRVTNAEEYTEALSDSFQYDYKVLIEEAVNGAREL. Mg(2+) contacts are provided by D303, E316, and N318.

The protein belongs to the D-alanine--D-alanine ligase family. Mg(2+) is required as a cofactor. Requires Mn(2+) as cofactor.

The protein localises to the cytoplasm. It catalyses the reaction 2 D-alanine + ATP = D-alanyl-D-alanine + ADP + phosphate + H(+). The protein operates within cell wall biogenesis; peptidoglycan biosynthesis. In terms of biological role, cell wall formation. This Leuconostoc mesenteroides subsp. mesenteroides (strain ATCC 8293 / DSM 20343 / BCRC 11652 / CCM 1803 / JCM 6124 / NCDO 523 / NBRC 100496 / NCIMB 8023 / NCTC 12954 / NRRL B-1118 / 37Y) protein is D-alanine--D-alanine ligase.